Consider the following 283-residue polypeptide: uncharacterized protein (283 aa).

This is an uncharacterized protein from Caenorhabditis elegans.